The following is a 729-amino-acid chain: Sorting nexin mvp1 (729 aa).

Disordered regions lie at residues 1 to 43 (MSLF…SANL) and 177 to 340 (PLPK…EEPN). Residues 356–464 (EETVTVNLLP…VMFLTVPTEL (109 aa)) enclose the PX domain. Arg-392, Ser-394, Lys-418, and Arg-431 together coordinate a 1,2-diacyl-sn-glycero-3-phospho-(1D-myo-inositol-3-phosphate).

Belongs to the sorting nexin family.

It localises to the cytoplasm. It is found in the membrane. Required for vacuolar protein sorting. The protein is Sorting nexin mvp1 (mvp1) of Aspergillus fumigatus (strain ATCC MYA-4609 / CBS 101355 / FGSC A1100 / Af293) (Neosartorya fumigata).